The primary structure comprises 208 residues: dTTP/UTP pyrophosphatase (208 aa).

Aspartate 78 serves as the catalytic Proton acceptor.

It belongs to the Maf family. YhdE subfamily. A divalent metal cation serves as cofactor.

It localises to the cytoplasm. It carries out the reaction dTTP + H2O = dTMP + diphosphate + H(+). It catalyses the reaction UTP + H2O = UMP + diphosphate + H(+). In terms of biological role, nucleoside triphosphate pyrophosphatase that hydrolyzes dTTP and UTP. May have a dual role in cell division arrest and in preventing the incorporation of modified nucleotides into cellular nucleic acids. The sequence is that of dTTP/UTP pyrophosphatase from Maricaulis maris (strain MCS10) (Caulobacter maris).